We begin with the raw amino-acid sequence, 436 residues long: Trigger factor (436 aa).

The 86-residue stretch at 161–246 folds into the PPIase FKBP-type domain; it reads DDQLNIDFVG…VNSVAEPKLP (86 aa).

This sequence belongs to the FKBP-type PPIase family. Tig subfamily.

It is found in the cytoplasm. The catalysed reaction is [protein]-peptidylproline (omega=180) = [protein]-peptidylproline (omega=0). Involved in protein export. Acts as a chaperone by maintaining the newly synthesized protein in an open conformation. Functions as a peptidyl-prolyl cis-trans isomerase. The protein is Trigger factor of Pseudomonas aeruginosa (strain LESB58).